A 1273-amino-acid polypeptide reads, in one-letter code: MPAVERNAPFTKTFIRKPGQRNDTSIPLHTEAPPPLRQPTRIARAKTLTRPERSQPQVPLINPSSGGPGFSAASRSKHRFSWWTAFSLFVTFWAPSPLLSSCCGLKDKQSRQAWREKVSLVFIAILLGGFIGFITMGLNAALCPSASSHSPNTYSRIGTGGAILGVHGWAFDIAQAHHLPEAPALFSLSTSRPGSDISSLFARSTSDQSPACRGTTAAYAADASCVALNGTLLKDCPLGPLSPATFAQYGMYNQTRKIGYGWEDVESANFSNFLVLDGVVLNMSPYLKANPSPIAADVVDLAIRQQLATSPHRGRDATITFYTNPTTRNAIKCLTQKYVAGYIDKITPGCFISNLVLYCSLVVILAIVLIRFFMAVWFAWFMAGRMSSPPRPSRRRRLAPNVLPEGAMISLNSSGAAPWANKQRPPPSQPARRRRDSAQSATPSVPDSLSVHHIGDEPYVVCLVTAYSENEEGISTTLTSLSETHYSDQRKLLFVVADGMVTGSGESMSTPDVCVSLLEADPRFGTPIPMSFVSIASGKKEHNMAMVYAGHYTRATGRRTPMVVVVKCGAPEEAADSKPGNRGKRDSQMILMNFFQRVTYNDRMTPLDYDLFRKVHTLMGVTPDFFELCLMVDADTMVYPKSMKTLTNCMMRDPMIMGACGETRIANKTQSWVTMIQVYEYFISHHQAKAFESVFGGVTCLPGCFSMYRIKARKQTDDDWVPIIVKPEVTREYSQSVVTTLHQKNLLLLGEDRFLTTTLLRTFPNRKMVFCPEARCKTEVPHTFKMLLSQRRRWINSTIHNLMELVLVRDLCGTFCFSMQFVVFMDLLGTAVLPISIALTYTLVVTYCLNPPHSFTEAIPLMLLVAVIGMPALLILLATRKVVYVLWMLIYLLALPVWNFVLPVYSFWHFDDFSWGETRKVEGEAKQTGHGDEGGSATGNAVPLRRWEDWERSRLRKKKREEKRRRELERQFGSGFHNDNASDGDPDRKEAGMPLSRPGSDSFSDSVTVSDFDDDKWGNQIGGYDETLPPPVQIVRHSVWIGDQEVIIDTEDMEKMLETGWDDKAFRARNLSSASSTNALLQAQQPQYPSAVNRNRLSQMGAFATKRDAPAVPEIPARYSMYVQNNGGGRPANGHGNSNGHYEPGSYEMERTPSPGEYASLIRGGAPSPCSPGFGPAQPYGHSSAVSGGAGQYSTGSHARQRSGGANAAYNQPHQHPPQPSQPPQPPQPAQPTRPGGAPAAPPRGAGSQGSGFAGARPSNPTGRGRSYHDRFS.

Residues 1 to 69 (MPAVERNAPF…LINPSSGGPG (69 aa)) are disordered. Residues 1 to 79 (MPAVERNAPF…FSAASRSKHR (79 aa)) lie on the Cytoplasmic side of the membrane. A helical membrane pass occupies residues 80 to 100 (FSWWTAFSLFVTFWAPSPLLS). The Extracellular portion of the chain corresponds to 101–117 (SCCGLKDKQSRQAWREK). A helical membrane pass occupies residues 118 to 138 (VSLVFIAILLGGFIGFITMGL). Residues 139 to 360 (NAALCPSASS…FISNLVLYCS (222 aa)) lie on the Cytoplasmic side of the membrane. The chain crosses the membrane as a helical span at residues 361-381 (LVVILAIVLIRFFMAVWFAWF). Over 382 to 820 (MAGRMSSPPR…LCGTFCFSMQ (439 aa)) the chain is Extracellular. N-linked (GlcNAc...) asparagine glycosylation is present at Asn-412. A disordered region spans residues 416–451 (AAPWANKQRPPPSQPARRRRDSAQSATPSVPDSLSV). Asn-667 and Asn-796 each carry an N-linked (GlcNAc...) asparagine glycan. Residues 821–841 (FVVFMDLLGTAVLPISIALTY) form a helical membrane-spanning segment. Topologically, residues 842 to 857 (TLVVTYCLNPPHSFTE) are cytoplasmic. The chain crosses the membrane as a helical span at residues 858–878 (AIPLMLLVAVIGMPALLILLA). Residues 879 to 881 (TRK) are Extracellular-facing. A helical transmembrane segment spans residues 882 to 902 (VVYVLWMLIYLLALPVWNFVL). The Cytoplasmic segment spans residues 903–1273 (PVYSFWHFDD…RGRSYHDRFS (371 aa)). Disordered stretches follow at residues 966 to 1009 (RELE…SVTV) and 1126 to 1273 (NGGG…DRFS). Positions 1000 to 1009 (SDSFSDSVTV) are enriched in low complexity. Over residues 1215-1232 (QHPPQPSQPPQPPQPAQP) the composition is skewed to pro residues. Residues 1233–1246 (TRPGGAPAAPPRGA) show a composition bias toward low complexity.

It belongs to the chitin synthase family. Class IV subfamily.

It localises to the cell membrane. The protein localises to the cytoplasmic vesicle membrane. The enzyme catalyses [(1-&gt;4)-N-acetyl-beta-D-glucosaminyl](n) + UDP-N-acetyl-alpha-D-glucosamine = [(1-&gt;4)-N-acetyl-beta-D-glucosaminyl](n+1) + UDP + H(+). Polymerizes chitin, a structural polymer of the cell wall and septum, by transferring the sugar moiety of UDP-GlcNAc to the non-reducing end of the growing chitin polymer. The sequence is that of Chitin synthase 7 from Mycosarcoma maydis (Corn smut fungus).